The primary structure comprises 223 residues: Voltage-dependent calcium channel gamma-1 subunit (223 aa).

The Cytoplasmic portion of the chain corresponds to 1 to 10; sequence MSQTKTAKVR. Residues 11-29 traverse the membrane as a helical segment; sequence VTLFFILAGGVLAMVAVVT. Residues 30–109 lie on the Extracellular side of the membrane; that stretch reads DHWAVLSPHL…TQKEYSISAA (80 aa). 2 N-linked (GlcNAc...) asparagine glycosylation sites follow: Asn-43 and Asn-80. A disulfide bridge connects residues Cys-57 and Cys-81. The helical transmembrane segment at 110–130 threads the bilayer; it reads AIAIFSLGFIIIGSICAFLSF. Residues 131-135 lie on the Cytoplasmic side of the membrane; sequence GNKRD. The helical transmembrane segment at 136-156 threads the bilayer; sequence YLLRPASMFYAFAGLCLIVSV. Topologically, residues 157 to 180 are extracellular; the sequence is EVMRQSVKRMIDSEDTVWIEYYYS. A helical membrane pass occupies residues 181–205; the sequence is WSFACACAGFTLLFLGGLFLLLFSL. Residues 206 to 223 are Cytoplasmic-facing; it reads PRMPQNPWESCMDTESEH.

The protein belongs to the PMP-22/EMP/MP20 family. CACNG subfamily. Component of a calcium channel complex consisting of a pore-forming alpha subunit (CACNA1S) and the ancillary subunits CACNB1 or CACNB2, CACNG1 and CACNA2D1. The channel complex contains alpha, beta, gamma and delta subunits in a 1:1:1:1 ratio, i.e. it contains either CACNB1 or CACNB2. N-glycosylated. Skeletal muscle.

Its subcellular location is the cell membrane. It is found in the sarcolemma. Its function is as follows. Regulatory subunit of the voltage-gated calcium channel that gives rise to L-type calcium currents in skeletal muscle. Regulates channel inactivation kinetics. The chain is Voltage-dependent calcium channel gamma-1 subunit (Cacng1) from Rattus norvegicus (Rat).